Consider the following 179-residue polypeptide: Negative modulator of initiation of replication (179 aa).

The protein belongs to the SeqA family. In terms of assembly, homodimer. Polymerizes to form helical filaments.

It localises to the cytoplasm. Its function is as follows. Negative regulator of replication initiation, which contributes to regulation of DNA replication and ensures that replication initiation occurs exactly once per chromosome per cell cycle. Binds to pairs of hemimethylated GATC sequences in the oriC region, thus preventing assembly of replication proteins and re-initiation at newly replicated origins. Repression is relieved when the region becomes fully methylated. The sequence is that of Negative modulator of initiation of replication from Vibrio atlanticus (strain LGP32) (Vibrio splendidus (strain Mel32)).